Reading from the N-terminus, the 474-residue chain is Glycogen synthase (474 aa).

Residue K15 participates in ADP-alpha-D-glucose binding.

The protein belongs to the glycosyltransferase 1 family. Bacterial/plant glycogen synthase subfamily.

The catalysed reaction is [(1-&gt;4)-alpha-D-glucosyl](n) + ADP-alpha-D-glucose = [(1-&gt;4)-alpha-D-glucosyl](n+1) + ADP + H(+). Its pathway is glycan biosynthesis; glycogen biosynthesis. Synthesizes alpha-1,4-glucan chains using ADP-glucose. This is Glycogen synthase from Chlamydia trachomatis serovar L2b (strain UCH-1/proctitis).